We begin with the raw amino-acid sequence, 279 residues long: Putative pyruvate, phosphate dikinase regulatory protein (279 aa).

153–160 (GISRTSKT) is a binding site for ADP.

It belongs to the pyruvate, phosphate/water dikinase regulatory protein family. PDRP subfamily.

It catalyses the reaction N(tele)-phospho-L-histidyl/L-threonyl-[pyruvate, phosphate dikinase] + ADP = N(tele)-phospho-L-histidyl/O-phospho-L-threonyl-[pyruvate, phosphate dikinase] + AMP + H(+). The catalysed reaction is N(tele)-phospho-L-histidyl/O-phospho-L-threonyl-[pyruvate, phosphate dikinase] + phosphate + H(+) = N(tele)-phospho-L-histidyl/L-threonyl-[pyruvate, phosphate dikinase] + diphosphate. In terms of biological role, bifunctional serine/threonine kinase and phosphorylase involved in the regulation of the pyruvate, phosphate dikinase (PPDK) by catalyzing its phosphorylation/dephosphorylation. The polypeptide is Putative pyruvate, phosphate dikinase regulatory protein (Brucella melitensis biotype 2 (strain ATCC 23457)).